Here is a 59-residue protein sequence, read N- to C-terminus: Large ribosomal subunit protein bL32 (59 aa).

Residues 1 to 59 (MAVQQNKKSPSKRGMHRSHDALTAPALFVDSTTGEVHRPHHISPNGMYRGRKVVKAKGE) form a disordered region. Positions 49–59 (RGRKVVKAKGE) are enriched in basic residues.

Belongs to the bacterial ribosomal protein bL32 family.

The protein is Large ribosomal subunit protein bL32 of Neisseria gonorrhoeae (strain ATCC 700825 / FA 1090).